A 230-amino-acid polypeptide reads, in one-letter code: Large ribosomal subunit protein uL1 (230 aa).

The protein belongs to the universal ribosomal protein uL1 family. In terms of assembly, part of the 50S ribosomal subunit.

Its function is as follows. Binds directly to 23S rRNA. The L1 stalk is quite mobile in the ribosome, and is involved in E site tRNA release. In terms of biological role, protein L1 is also a translational repressor protein, it controls the translation of the L11 operon by binding to its mRNA. The protein is Large ribosomal subunit protein uL1 of Granulibacter bethesdensis (strain ATCC BAA-1260 / CGDNIH1).